Reading from the N-terminus, the 99-residue chain is Putative protein YgeP (99 aa).

The chain is Putative protein YgeP (ygeP) from Escherichia coli (strain K12).